A 353-amino-acid chain; its full sequence is Phospho-N-acetylmuramoyl-pentapeptide-transferase (353 aa).

A run of 10 helical transmembrane segments spans residues 22–42 (FAFF…ITWA), 65–85 (TPTM…LSCI), 88–108 (DNIF…IGLI), 129–149 (LLTQ…SSEL), 161–181 (PLFD…ISSS), 192–212 (GLAT…LYLS), 228–248 (GLGE…GFLW), 256–276 (VFMG…LAII), 281–301 (ILLL…ILQV), and 330–350 (KIIV…LASI).

Belongs to the glycosyltransferase 4 family. MraY subfamily. The cofactor is Mg(2+).

The protein localises to the cell inner membrane. The enzyme catalyses UDP-N-acetyl-alpha-D-muramoyl-L-alanyl-gamma-D-glutamyl-meso-2,6-diaminopimeloyl-D-alanyl-D-alanine + di-trans,octa-cis-undecaprenyl phosphate = di-trans,octa-cis-undecaprenyl diphospho-N-acetyl-alpha-D-muramoyl-L-alanyl-D-glutamyl-meso-2,6-diaminopimeloyl-D-alanyl-D-alanine + UMP. The protein operates within cell wall biogenesis; peptidoglycan biosynthesis. In terms of biological role, catalyzes the initial step of the lipid cycle reactions in the biosynthesis of the cell wall peptidoglycan: transfers peptidoglycan precursor phospho-MurNAc-pentapeptide from UDP-MurNAc-pentapeptide onto the lipid carrier undecaprenyl phosphate, yielding undecaprenyl-pyrophosphoryl-MurNAc-pentapeptide, known as lipid I. This Campylobacter jejuni subsp. jejuni serotype O:23/36 (strain 81-176) protein is Phospho-N-acetylmuramoyl-pentapeptide-transferase.